The following is a 164-amino-acid chain: Phosphopantetheine adenylyltransferase (164 aa).

A substrate-binding site is contributed by Ser11. ATP is bound by residues Ser11 to Phe12 and His19. Substrate is bound by residues Lys43, Leu75, and Arg89. ATP is bound by residues Gly90–Arg92, Glu100, and Tyr125–Ser131.

Belongs to the bacterial CoaD family. In terms of assembly, homohexamer. Mg(2+) is required as a cofactor.

The protein localises to the cytoplasm. The catalysed reaction is (R)-4'-phosphopantetheine + ATP + H(+) = 3'-dephospho-CoA + diphosphate. The protein operates within cofactor biosynthesis; coenzyme A biosynthesis; CoA from (R)-pantothenate: step 4/5. Its function is as follows. Reversibly transfers an adenylyl group from ATP to 4'-phosphopantetheine, yielding dephospho-CoA (dPCoA) and pyrophosphate. The protein is Phosphopantetheine adenylyltransferase of Geobacter sulfurreducens (strain ATCC 51573 / DSM 12127 / PCA).